A 1047-amino-acid chain; its full sequence is Error-prone DNA polymerase (1047 aa).

Belongs to the DNA polymerase type-C family. DnaE2 subfamily.

The protein localises to the cytoplasm. The enzyme catalyses DNA(n) + a 2'-deoxyribonucleoside 5'-triphosphate = DNA(n+1) + diphosphate. Functionally, DNA polymerase involved in damage-induced mutagenesis and translesion synthesis (TLS). It is not the major replicative DNA polymerase. The protein is Error-prone DNA polymerase of Methylococcus capsulatus (strain ATCC 33009 / NCIMB 11132 / Bath).